A 1333-amino-acid chain; its full sequence is DNA-directed RNA polymerase subunit beta' (1333 aa).

Zn(2+)-binding residues include Cys60, Cys62, Cys75, and Cys78. Residues Asp535, Asp537, and Asp539 each contribute to the Mg(2+) site. Cys901, Cys983, Cys990, and Cys993 together coordinate Zn(2+).

The protein belongs to the RNA polymerase beta' chain family. In terms of assembly, the RNAP catalytic core consists of 2 alpha, 1 beta, 1 beta' and 1 omega subunit. When a sigma factor is associated with the core the holoenzyme is formed, which can initiate transcription. Mg(2+) is required as a cofactor. It depends on Zn(2+) as a cofactor.

It carries out the reaction RNA(n) + a ribonucleoside 5'-triphosphate = RNA(n+1) + diphosphate. In terms of biological role, DNA-dependent RNA polymerase catalyzes the transcription of DNA into RNA using the four ribonucleoside triphosphates as substrates. This Corynebacterium efficiens (strain DSM 44549 / YS-314 / AJ 12310 / JCM 11189 / NBRC 100395) protein is DNA-directed RNA polymerase subunit beta'.